The chain runs to 347 residues: 4-hydroxy-2-oxovalerate aldolase (347 aa).

The Pyruvate carboxyltransferase domain occupies 2-252 (ILISDATLRD…DTRTTFERVM (251 aa)). 10-11 (RD) lines the substrate pocket. A Mn(2+)-binding site is contributed by Asp-11. The Proton acceptor role is filled by His-14. Substrate contacts are provided by Ser-164 and His-191. The Mn(2+) site is built by His-191 and His-193.

This sequence belongs to the 4-hydroxy-2-oxovalerate aldolase family.

It catalyses the reaction (S)-4-hydroxy-2-oxopentanoate = acetaldehyde + pyruvate. The chain is 4-hydroxy-2-oxovalerate aldolase (mhpE) from Burkholderia pseudomallei (strain 1710b).